The following is a 245-amino-acid chain: MAGVTLTLLPAVDVADGRAVRLVQGEAGSETSYGDPLEAALTWQRDGAEWIHLVDLDAAFGRGSNRELIAEVVRSVDVAVELSGGIRDDDSLDAALATGAARVNIGTAALEDPDWVRRAIDRVGDRIAVGLDVRGTTLAARGWTQDGGELFEVLARLDADGCARYVVTDVRRDGTLTGPNVELLRSVTAVTDRPVVASGGVSALADLVAIAAVPGVEGAIVGKALYAGAFTLPEALAVTSTVVAG.

The active-site Proton acceptor is aspartate 13. Aspartate 132 functions as the Proton donor in the catalytic mechanism.

It belongs to the HisA/HisF family.

It is found in the cytoplasm. It carries out the reaction 1-(5-phospho-beta-D-ribosyl)-5-[(5-phospho-beta-D-ribosylamino)methylideneamino]imidazole-4-carboxamide = 5-[(5-phospho-1-deoxy-D-ribulos-1-ylimino)methylamino]-1-(5-phospho-beta-D-ribosyl)imidazole-4-carboxamide. It participates in amino-acid biosynthesis; L-histidine biosynthesis; L-histidine from 5-phospho-alpha-D-ribose 1-diphosphate: step 4/9. In Frankia alni (strain DSM 45986 / CECT 9034 / ACN14a), this protein is 1-(5-phosphoribosyl)-5-[(5-phosphoribosylamino)methylideneamino] imidazole-4-carboxamide isomerase.